The following is a 329-amino-acid chain: DNA-directed RNA polymerase subunit alpha (329 aa).

Residues 1–235 (MQGSVTEFLK…EQLEAFVDLR (235 aa)) are alpha N-terminal domain (alpha-NTD). An alpha C-terminal domain (alpha-CTD) region spans residues 249-329 (FDPILLRPVD…NWPPASIADE (81 aa)).

It belongs to the RNA polymerase alpha chain family. Homodimer. The RNAP catalytic core consists of 2 alpha, 1 beta, 1 beta' and 1 omega subunit. When a sigma factor is associated with the core the holoenzyme is formed, which can initiate transcription.

The catalysed reaction is RNA(n) + a ribonucleoside 5'-triphosphate = RNA(n+1) + diphosphate. In terms of biological role, DNA-dependent RNA polymerase catalyzes the transcription of DNA into RNA using the four ribonucleoside triphosphates as substrates. The protein is DNA-directed RNA polymerase subunit alpha of Shigella dysenteriae serotype 1 (strain Sd197).